A 108-amino-acid chain; its full sequence is uncharacterized protein (108 aa).

3 consecutive transmembrane segments (helical) span residues 10 to 32 (SLCYFSVFIAPIIVPIVAYFVVN), 45 to 67 (ISHIVPFVGWLFLFIALLGGAVA), and 77 to 99 (FVIIGGAVIYFLVVIGIIIWNVI).

It localises to the cell membrane. This is an uncharacterized protein from Bacillus subtilis (strain 168).